We begin with the raw amino-acid sequence, 575 residues long: SH2B adapter protein 3 (575 aa).

Disordered regions lie at residues 1–23 (MNGPALQPSSPSSAPSASPAAAP), 83–136 (RAPG…CSFQ), and 150–176 (SAGELPAAHTAAAPGTPGEAAETPARP). S13 carries the post-translational modification Phosphoserine. The span at 83 to 93 (RAPGRDYRDTG) shows a compositional bias: basic and acidic residues. Residues 95–104 (GPPAKAEASP) are compositionally biased toward low complexity. Residues S103, S120, and S150 each carry the phosphoserine modification. Residues 152-174 (GELPAAHTAAAPGTPGEAAETPA) show a composition bias toward low complexity. In terms of domain architecture, PH spans 194–307 (EALKEAVLRY…WMAELSECTG (114 aa)). The interval 322 to 346 (ALEPSTSSSPRGSTDSLNQGASPGG) is disordered. The span at 325–337 (PSTSSSPRGSTDS) shows a compositional bias: low complexity. At S330 the chain carries Phosphoserine. Residues 364–462 (WFHGPISRVK…ACDVRLSSYV (99 aa)) enclose the SH2 domain. Disordered stretches follow at residues 503–525 (SSGCPRGLSPEGLPGRSSPPEQI) and 546–575 (PVNRARDSDYEMDSSSRSHLRAIDNQYTPL).

It belongs to the SH2B adapter family. Binds to the tyrosine-phosphorylated TCR zeta chain via its SH2 domain. In terms of processing, tyrosine phosphorylated by LCK. In terms of tissue distribution, preferentially expressed by lymphoid cell lines.

Functionally, links T-cell receptor activation signal to phospholipase C-gamma-1, GRB2 and phosphatidylinositol 3-kinase. The polypeptide is SH2B adapter protein 3 (SH2B3) (Homo sapiens (Human)).